The following is a 333-amino-acid chain: Ketol-acid reductoisomerase (NADP(+)) (333 aa).

In terms of domain architecture, KARI N-terminal Rossmann spans 2–182 (ANIYYDSDCD…GGGRAGILET (181 aa)). NADP(+) is bound by residues 25–28 (YGSQ), Lys48, Ser51, Ser53, and 83–86 (DTIQ). Residue His108 is part of the active site. An NADP(+)-binding site is contributed by Gly134. The region spanning 183 to 331 (SFREETETDL…KKLRSMMKWL (149 aa)) is the KARI C-terminal knotted domain. Residues Asp191, Glu195, Glu227, and Glu231 each coordinate Mg(2+). Ser252 serves as a coordination point for substrate.

Belongs to the ketol-acid reductoisomerase family. The cofactor is Mg(2+).

It carries out the reaction (2R)-2,3-dihydroxy-3-methylbutanoate + NADP(+) = (2S)-2-acetolactate + NADPH + H(+). It catalyses the reaction (2R,3R)-2,3-dihydroxy-3-methylpentanoate + NADP(+) = (S)-2-ethyl-2-hydroxy-3-oxobutanoate + NADPH + H(+). Its pathway is amino-acid biosynthesis; L-isoleucine biosynthesis; L-isoleucine from 2-oxobutanoate: step 2/4. The protein operates within amino-acid biosynthesis; L-valine biosynthesis; L-valine from pyruvate: step 2/4. Its function is as follows. Involved in the biosynthesis of branched-chain amino acids (BCAA). Catalyzes an alkyl-migration followed by a ketol-acid reduction of (S)-2-acetolactate (S2AL) to yield (R)-2,3-dihydroxy-isovalerate. In the isomerase reaction, S2AL is rearranged via a Mg-dependent methyl migration to produce 3-hydroxy-3-methyl-2-ketobutyrate (HMKB). In the reductase reaction, this 2-ketoacid undergoes a metal-dependent reduction by NADPH to yield (R)-2,3-dihydroxy-isovalerate. The protein is Ketol-acid reductoisomerase (NADP(+)) of Leptospira interrogans serogroup Icterohaemorrhagiae serovar copenhageni (strain Fiocruz L1-130).